The primary structure comprises 747 residues: Pyrin (747 aa).

Residues 1–92 (MANTRVDHLL…AEELHKATGP (92 aa)) enclose the Pyrin domain. The disordered stretch occupies residues 89-181 (ATGPEHLTEE…GARSAAPLYR (93 aa)). Residues 122 to 135 (PGEDEAQQNDDESD) show a composition bias toward acidic residues. Zn(2+) contacts are provided by C442, H445, C465, and H471. The B box-type zinc-finger motif lies at 442 to 479 (CPRHMKQVQLLFCEDHREPICLICRLSQEHQGHRVRPI). Positions 479 to 508 (IEEAALQYKEQIRKQLERLREMRGYVEEHK) form a coiled coil. A required for homotrimerization and induction of pyroptosomes region spans residues 487–645 (KEQIRKQLER…RFSEMLGSEM (159 aa)). Residues 698-720 (EPQDYLHPSSAQDTPELHEIHSQ) form a disordered region.

Homotrimer. Interacts (via the B box-type zinc finger) with PSTPIP1. Interacts (via the B30.2/SPRY domain) with several components of the inflammasome complex, including CASP1 p20 and p10 subunits, CASP5, PYCARD, NLRP1, NLRP2 and NLRP3, as well as with unprocessed IL1B; this interaction may lead to autophagic degradation of these proteins. Component of the AIM2 PANoptosome complex, a multiprotein complex that drives inflammatory cell death (PANoptosis). Interacts with NFKBIA and RELA. Interacts weakly with VASP and ACTR3. Interacts with active ULK1 (phosphorylated on 'Ser-317') and BECN1 simultaneously. Also interacts with ATG16L1 (via WD repeats), and with ATG8 family members, including GABARAP, GABARAPL1 and, to a lesser extent, GABARAPL2, MAP1LC3A/LC3A and MAP1LC3C/LC3C. Interacts with TRIM21. Interacts with YWHAB, YWHAE, YWHAG, YWHAH, YWHAQ and YWHAZ; the interaction is required for the down-regulation of pyrin pro-inflammatory activity. Degraded along with the delivery of its substrates to autolysosomal compartments (at protein level). Expressed in spleen and, to a lesser degree in the lung. Not expressed in thymus, testis, ovary, heart, brain, liver, kidney and muscle.

It localises to the cytoplasm. It is found in the cytoskeleton. The protein localises to the cell projection. The protein resides in the ruffle. Its subcellular location is the lamellipodium. It localises to the cytoplasmic vesicle. It is found in the autophagosome. The protein localises to the nucleus. In terms of biological role, involved in the regulation of innate immunity and the inflammatory response in response to IFNG/IFN-gamma. Organizes autophagic machinery by serving as a platform for the assembly of ULK1, Beclin 1/BECN1, ATG16L1, and ATG8 family members and recognizes specific autophagy targets, thus coordinating target recognition with assembly of the autophagic apparatus and initiation of autophagy. Acts as an autophagy receptor for the degradation of several inflammasome components, including CASP1, NLRP1 and NLRP3, hence preventing excessive IL1B- and IL18-mediated inflammation. However, it can also have a positive effect in the inflammatory pathway, acting as an innate immune sensor that triggers PYCARD/ASC specks formation, caspase-1 activation, and IL1B and IL18 production. Together with AIM2, also acts as a mediator of pyroptosis, necroptosis and apoptosis (PANoptosis), an integral part of host defense against pathogens, in response to bacterial infection. It is required for PSTPIP1-induced PYCARD/ASC oligomerization and inflammasome formation. Recruits PSTPIP1 to inflammasomes, and is required for PSTPIP1 oligomerization. The protein is Pyrin of Rattus norvegicus (Rat).